The sequence spans 152 residues: Nucleoside diphosphate kinase B (152 aa).

An interaction with AKAP13 region spans residues 1–66; it reads MAHAERTFIA…DRPFFPGLVK (66 aa). K12, F60, R88, T94, R105, and N115 together coordinate ATP. The active-site Pros-phosphohistidine intermediate is H118.

The protein belongs to the NDK family. As to quaternary structure, hexamer of two different chains: An and B (A6, A5B, A4B2, A3B3, A2B4, AB5, B6). Interacts with CAPN8. Interacts with AKAP13. Interacts with ITGB1BP1 (via C-terminal domain region). Interacts with BCL2L10. Mg(2+) is required as a cofactor.

The protein resides in the cytoplasm. Its subcellular location is the cell projection. The protein localises to the lamellipodium. It localises to the ruffle. It is found in the nucleus. It carries out the reaction a 2'-deoxyribonucleoside 5'-diphosphate + ATP = a 2'-deoxyribonucleoside 5'-triphosphate + ADP. The catalysed reaction is a ribonucleoside 5'-diphosphate + ATP = a ribonucleoside 5'-triphosphate + ADP. It catalyses the reaction ATP + protein L-histidine = ADP + protein N-phospho-L-histidine.. In terms of biological role, major role in the synthesis of nucleoside triphosphates other than ATP. The ATP gamma phosphate is transferred to the NDP beta phosphate via a ping-pong mechanism, using a phosphorylated active-site intermediate. Negatively regulates Rho activity by interacting with AKAP13/LBC. Acts as a transcriptional activator of the MYC gene; binds DNA non-specifically. Binds to both single-stranded guanine- and cytosine-rich strands within the nuclease hypersensitive element (NHE) III(1) region of the MYC gene promoter. Does not bind to duplex NHE III(1). Has G-quadruplex (G4) DNA-binding activity, which is independent of its nucleotide-binding and kinase activity. Binds both folded and unfolded G4 with similar low nanomolar affinities. Stabilizes folded G4s regardless of whether they are prefolded or not. Exhibits histidine protein kinase activity. The polypeptide is Nucleoside diphosphate kinase B (NME2) (Bos taurus (Bovine)).